Reading from the N-terminus, the 182-residue chain is Ribosome-recycling factor (182 aa).

The protein belongs to the RRF family.

The protein resides in the cytoplasm. In terms of biological role, responsible for the release of ribosomes from messenger RNA at the termination of protein biosynthesis. May increase the efficiency of translation by recycling ribosomes from one round of translation to another. This chain is Ribosome-recycling factor, found in Mycoplasma capricolum subsp. capricolum (strain California kid / ATCC 27343 / NCTC 10154).